Reading from the N-terminus, the 347-residue chain is N-acetyl-gamma-glutamyl-phosphate reductase (347 aa).

C150 is a catalytic residue.

Belongs to the NAGSA dehydrogenase family. Type 1 subfamily.

Its subcellular location is the cytoplasm. The enzyme catalyses N-acetyl-L-glutamate 5-semialdehyde + phosphate + NADP(+) = N-acetyl-L-glutamyl 5-phosphate + NADPH + H(+). It functions in the pathway amino-acid biosynthesis; L-arginine biosynthesis; N(2)-acetyl-L-ornithine from L-glutamate: step 3/4. Its function is as follows. Catalyzes the NADPH-dependent reduction of N-acetyl-5-glutamyl phosphate to yield N-acetyl-L-glutamate 5-semialdehyde. The polypeptide is N-acetyl-gamma-glutamyl-phosphate reductase (Leifsonia xyli subsp. xyli (strain CTCB07)).